An 86-amino-acid polypeptide reads, in one-letter code: Colicin-E9 immunity protein (86 aa).

The protein belongs to the colicins ColE2/ColE8/ColE9 and pyocins S1/S2 family.

Its function is as follows. This protein is able to protect a cell, which harbors the plasmid ColE9 encoding colicin E9, against colicin E9, it binds specifically to the DNase-type colicin and inhibits its bactericidal activity. In Escherichia coli, this protein is Colicin-E9 immunity protein (imm).